The primary structure comprises 272 residues: Ribosomal RNA small subunit methyltransferase A (272 aa).

S-adenosyl-L-methionine contacts are provided by N18, L20, G45, E66, D91, and N113.

This sequence belongs to the class I-like SAM-binding methyltransferase superfamily. rRNA adenine N(6)-methyltransferase family. RsmA subfamily.

It localises to the cytoplasm. The catalysed reaction is adenosine(1518)/adenosine(1519) in 16S rRNA + 4 S-adenosyl-L-methionine = N(6)-dimethyladenosine(1518)/N(6)-dimethyladenosine(1519) in 16S rRNA + 4 S-adenosyl-L-homocysteine + 4 H(+). Its function is as follows. Specifically dimethylates two adjacent adenosines (A1518 and A1519) in the loop of a conserved hairpin near the 3'-end of 16S rRNA in the 30S particle. May play a critical role in biogenesis of 30S subunits. The protein is Ribosomal RNA small subunit methyltransferase A of Pectobacterium atrosepticum (strain SCRI 1043 / ATCC BAA-672) (Erwinia carotovora subsp. atroseptica).